The chain runs to 100 residues: Glyceraldehyde-3-phosphate dehydrogenase, testis-specific (100 aa).

Positions 39 and 64 each coordinate NAD(+). Arginine 89 serves as a coordination point for D-glyceraldehyde 3-phosphate.

The protein belongs to the glyceraldehyde-3-phosphate dehydrogenase family. In terms of assembly, homotetramer.

The protein localises to the cytoplasm. The enzyme catalyses D-glyceraldehyde 3-phosphate + phosphate + NAD(+) = (2R)-3-phospho-glyceroyl phosphate + NADH + H(+). It functions in the pathway carbohydrate degradation; glycolysis; pyruvate from D-glyceraldehyde 3-phosphate: step 1/5. May play an important role in regulating the switch between different pathways for energy production during spermiogenesis and in the spermatozoon. Required for sperm motility and male fertility. The protein is Glyceraldehyde-3-phosphate dehydrogenase, testis-specific of Mesocricetus auratus (Golden hamster).